The primary structure comprises 1012 residues: Structural polyprotein (1012 aa).

Residue Asp30 participates in a divalent metal cation binding. The Peptidase S50 domain occupies 513–755 (ADKGYEVVAN…AGRQYDLAMA (243 aa)). Ser652 functions as the Nucleophile in the catalytic mechanism. Lys692 is an active-site residue. Residues 971–1012 (EMKHRNPRRAPPKPKPKPNVPTQRPPGRLGRWIRAVSDEDLE) are disordered. Basic residues predominate over residues 975 to 986 (RNPRRAPPKPKP). Residues 1003 to 1012 (IRAVSDEDLE) form an interaction with VP1 protein region.

Homotrimer. A central divalent metal stabilizes the VP2 trimer. Interacts with host ITGA4/ITGB1. In terms of assembly, homodimer. Interacts (via C-terminus) with VP1 in the cytoplasm. Interacts with VP2. Specific enzymatic cleavages yield mature proteins. The capsid assembly seems to be regulated by polyprotein processing. The protease VP4 cleaves itself off the polyprotein, thus releasing pre-VP2 and VP3 within the infected cell. During capsid assembly, the C-terminus of pre-VP2 is further processed by VP4, giving rise to VP2, the external capsid protein and three small peptides that all stay closely associated with the capsid.

It is found in the virion. The protein resides in the host cytoplasm. Its function is as follows. Capsid protein VP2 self assembles to form an icosahedral capsid with a T=13 symmetry, about 70 nm in diameter, and consisting of 260 VP2 trimers. The capsid encapsulates the genomic dsRNA. VP2 is also involved in attachment and entry into the host cell by interacting with host ITGA4/ITGB1. In terms of biological role, the precursor of VP2 plays an important role in capsid assembly. First, pre-VP2 and VP2 oligomers assemble to form a procapsid. Then, the pre-VP2 intermediates may be processed into VP2 proteins by proteolytic cleavage mediated by VP4 to obtain the mature virion. The final capsid is composed of pentamers and hexamers but VP2 has a natural tendency to assemble into all-pentameric structures. Therefore pre-VP2 may be required to allow formation of the hexameric structures. Protease VP4 is a serine protease that cleaves the polyprotein into its final products. Pre-VP2 is first partially cleaved, and may be completely processed by VP4 upon capsid maturation. Functionally, capsid protein VP3 plays a key role in virion assembly by providing a scaffold for the capsid made of VP2. May self-assemble to form a T=4-like icosahedral inner-capsid composed of at least 180 trimers. Plays a role in genomic RNA packaging by recruiting VP1 into the capsid and interacting with the dsRNA genome segments to form a ribonucleoprotein complex. Additionally, the interaction of the VP3 C-terminal tail with VP1 removes the inherent structural blockade of the polymerase active site. Thus, VP3 can also function as a transcriptional activator. Its function is as follows. Structural peptide 1 is a small peptide derived from pre-VP2 C-terminus. It destabilizes and perforates cell membranes, suggesting a role during entry. In terms of biological role, structural peptide 2 is a small peptide derived from pre-VP2 C-terminus. It is not essential for the virus viability, but viral growth is affected when missing. Structural peptide 3 is a small peptide derived from pre-VP2 C-terminus. It is not essential for the virus viability, but viral growth is affected when missing. This chain is Structural polyprotein, found in Avian infectious bursal disease virus (isolate Chicken/UK/UK661/1989) (IBDV).